The primary structure comprises 354 residues: Protein RecA (354 aa).

Residue Gly65–Thr72 coordinates ATP.

Belongs to the RecA family.

Its subcellular location is the cytoplasm. Its function is as follows. Can catalyze the hydrolysis of ATP in the presence of single-stranded DNA, the ATP-dependent uptake of single-stranded DNA by duplex DNA, and the ATP-dependent hybridization of homologous single-stranded DNAs. It interacts with LexA causing its activation and leading to its autocatalytic cleavage. In Pseudomonas syringae pv. syringae (strain B728a), this protein is Protein RecA.